Reading from the N-terminus, the 486-residue chain is Kynurenine 3-monooxygenase (486 aa).

Residues valine 19, tyrosine 37 to arginine 40, and alanine 57 contribute to the FAD site. L-kynurenine is bound by residues arginine 85 and tyrosine 99. FAD contacts are provided by residues arginine 111, leucine 136, threonine 172, aspartate 304, and methionine 317–asparagine 318. Residues asparagine 363 and tyrosine 398 each contribute to the L-kynurenine site. A run of 2 helical transmembrane segments spans residues phenylalanine 385 to serine 404 and glycine 425 to methionine 445. An N-linked (GlcNAc...) asparagine glycan is attached at asparagine 465.

It belongs to the aromatic-ring hydroxylase family. KMO subfamily. FAD serves as cofactor. In terms of tissue distribution, highest levels in placenta and liver. Detectable in kidney.

Its subcellular location is the mitochondrion outer membrane. The enzyme catalyses L-kynurenine + NADPH + O2 + H(+) = 3-hydroxy-L-kynurenine + NADP(+) + H2O. The protein operates within cofactor biosynthesis; NAD(+) biosynthesis; quinolinate from L-kynurenine: step 1/3. Its function is as follows. Catalyzes the hydroxylation of L-kynurenine (L-Kyn) to form 3-hydroxy-L-kynurenine (L-3OHKyn). Required for synthesis of quinolinic acid, a neurotoxic NMDA receptor antagonist and potential endogenous inhibitor of NMDA receptor signaling in axonal targeting, synaptogenesis and apoptosis during brain development. Quinolinic acid may also affect NMDA receptor signaling in pancreatic beta cells, osteoblasts, myocardial cells, and the gastrointestinal tract. The protein is Kynurenine 3-monooxygenase of Homo sapiens (Human).